The following is a 645-amino-acid chain: 1,4-alpha-glucan branching enzyme GlgB (645 aa).

The active-site Nucleophile is aspartate 309. The Proton donor role is filled by glutamate 352. Residues 621 to 645 form a disordered region; it reads MRKGSKKQDGKKAELRSNATSRRKR. The span at 626-635 shows a compositional bias: basic and acidic residues; the sequence is KKQDGKKAEL.

It belongs to the glycosyl hydrolase 13 family. GlgB subfamily. Monomer.

It catalyses the reaction Transfers a segment of a (1-&gt;4)-alpha-D-glucan chain to a primary hydroxy group in a similar glucan chain.. The protein operates within glycan biosynthesis; glycogen biosynthesis. Its function is as follows. Catalyzes the formation of the alpha-1,6-glucosidic linkages in glycogen by scission of a 1,4-alpha-linked oligosaccharide from growing alpha-1,4-glucan chains and the subsequent attachment of the oligosaccharide to the alpha-1,6 position. This Bacillus cytotoxicus (strain DSM 22905 / CIP 110041 / 391-98 / NVH 391-98) protein is 1,4-alpha-glucan branching enzyme GlgB.